The following is a 94-amino-acid chain: PqqA binding protein (94 aa).

Belongs to the PqqD family. In terms of assembly, monomer. Interacts with PqqE.

It participates in cofactor biosynthesis; pyrroloquinoline quinone biosynthesis. Its function is as follows. Functions as a PqqA binding protein and presents PqqA to PqqE, in the pyrroloquinoline quinone (PQQ) biosynthetic pathway. The polypeptide is PqqA binding protein (Pseudomonas syringae pv. syringae (strain B728a)).